The sequence spans 381 residues: Cytochrome b (381 aa).

A run of 4 helical transmembrane segments spans residues 34 to 54 (FGSL…FLAM), 78 to 99 (WLIR…YLHI), 114 to 134 (WNIG…GYVL), and 179 to 199 (FFAF…IHLL). Heme b contacts are provided by H84 and H98. The heme b site is built by H183 and H197. H202 is an a ubiquinone binding site. 4 helical membrane passes run 227–247 (YKDL…ALFM), 289–309 (LGGV…PLLH), 321–341 (MTQI…WIGG), and 348–368 (FIMV…IIMP).

Belongs to the cytochrome b family. As to quaternary structure, the cytochrome bc1 complex contains 3 respiratory subunits (MT-CYB, CYC1 and UQCRFS1), 2 core proteins (UQCRC1 and UQCRC2) and probably 6 low-molecular weight proteins. Heme b is required as a cofactor.

The protein resides in the mitochondrion inner membrane. Functionally, component of the ubiquinol-cytochrome c reductase complex (complex III or cytochrome b-c1 complex) that is part of the mitochondrial respiratory chain. The b-c1 complex mediates electron transfer from ubiquinol to cytochrome c. Contributes to the generation of a proton gradient across the mitochondrial membrane that is then used for ATP synthesis. In Carcharhinus plumbeus (Sandbar shark), this protein is Cytochrome b (mt-cyb).